We begin with the raw amino-acid sequence, 289 residues long: Splicing factor C9orf78 homolog (289 aa).

Residues 1-12 show a composition bias toward basic residues; sequence MPVVRKIFRRRR. Disordered stretches follow at residues 1–27 and 86–109; these read MPVV…SEEV and GKDK…TNRR. Residues 5-58 form an interaction with SNRNP200 region; sequence RKIFRRRRGDSESEEDEQDSEEVRLKLEETREVQNLRKRPNGVSAVALLVGEKV. Phosphoserine is present on residues Ser15 and Ser17. Tyr147 is subject to Phosphotyrosine. The segment covering 232–283 has biased composition (basic and acidic residues); it reads LNAPIRRNKEEPKARPLRVGDTEKPEPERSPPNRKRPANEKATDDYHYEKFK. Positions 232–289 are disordered; the sequence is LNAPIRRNKEEPKARPLRVGDTEKPEPERSPPNRKRPANEKATDDYHYEKFKKMNRRY. At Thr253 the chain carries Phosphothreonine. Phosphoserine is present on Ser261.

The protein belongs to the TLS1 family. In terms of assembly, component of the spliceosome. Interacts with SNRNP200; the interaction is direct. Interacts with PRPF8.

The protein resides in the nucleus. It localises to the chromosome. Its subcellular location is the centromere. Its function is as follows. Plays a role in pre-mRNA splicing by promoting usage of the upstream 3'-splice site at alternative NAGNAG splice sites; these are sites featuring alternative acceptor motifs separated by only a few nucleotides. May also modulate exon inclusion events. Plays a role in spliceosomal remodeling by displacing WBP4 from SNRNP200 and may act to inhibit SNRNP200 helicase activity. Binds U5 snRNA. Required for proper chromosome segregation. Not required for splicing of shelterin components. In Pongo abelii (Sumatran orangutan), this protein is Splicing factor C9orf78 homolog.